Reading from the N-terminus, the 383-residue chain is Acetylornithine deacetylase (383 aa).

His80 provides a ligand contact to Zn(2+). The active site involves Asp82. Asp112 is a Zn(2+) binding site. The active site involves Glu144. Positions 145, 169, and 355 each coordinate Zn(2+).

This sequence belongs to the peptidase M20A family. ArgE subfamily. Homodimer. Zn(2+) is required as a cofactor. Co(2+) serves as cofactor. It depends on glutathione as a cofactor.

The protein localises to the cytoplasm. It carries out the reaction N(2)-acetyl-L-ornithine + H2O = L-ornithine + acetate. The protein operates within amino-acid biosynthesis; L-arginine biosynthesis; L-ornithine from N(2)-acetyl-L-ornithine (linear): step 1/1. Functionally, catalyzes the hydrolysis of the amide bond of N(2)-acetylated L-amino acids. Cleaves the acetyl group from N-acetyl-L-ornithine to form L-ornithine, an intermediate in L-arginine biosynthesis pathway, and a branchpoint in the synthesis of polyamines. The protein is Acetylornithine deacetylase of Edwardsiella ictaluri (strain 93-146).